The following is a 269-amino-acid chain: 3-deoxy-manno-octulosonate cytidylyltransferase (269 aa).

It belongs to the KdsB family.

Its subcellular location is the cytoplasm. The enzyme catalyses 3-deoxy-alpha-D-manno-oct-2-ulosonate + CTP = CMP-3-deoxy-beta-D-manno-octulosonate + diphosphate. It functions in the pathway nucleotide-sugar biosynthesis; CMP-3-deoxy-D-manno-octulosonate biosynthesis; CMP-3-deoxy-D-manno-octulosonate from 3-deoxy-D-manno-octulosonate and CTP: step 1/1. The protein operates within bacterial outer membrane biogenesis; lipopolysaccharide biosynthesis. Activates KDO (a required 8-carbon sugar) for incorporation into bacterial lipopolysaccharide in Gram-negative bacteria. The chain is 3-deoxy-manno-octulosonate cytidylyltransferase from Cupriavidus pinatubonensis (strain JMP 134 / LMG 1197) (Cupriavidus necator (strain JMP 134)).